A 75-amino-acid polypeptide reads, in one-letter code: Small ribosomal subunit protein bS18 (75 aa).

The protein belongs to the bacterial ribosomal protein bS18 family. Part of the 30S ribosomal subunit. Forms a tight heterodimer with protein bS6.

In terms of biological role, binds as a heterodimer with protein bS6 to the central domain of the 16S rRNA, where it helps stabilize the platform of the 30S subunit. The polypeptide is Small ribosomal subunit protein bS18 (Idiomarina loihiensis (strain ATCC BAA-735 / DSM 15497 / L2-TR)).